A 497-amino-acid chain; its full sequence is Putative aldehyde dehydrogenase AldA (497 aa).

213–219 (GKGSESG) provides a ligand contact to NAD(+). Active-site residues include Glu-257 and Cys-291.

This sequence belongs to the aldehyde dehydrogenase family.

The enzyme catalyses an aldehyde + NAD(+) + H2O = a carboxylate + NADH + 2 H(+). The protein is Putative aldehyde dehydrogenase AldA (aldA) of Staphylococcus haemolyticus (strain JCSC1435).